Here is a 174-residue protein sequence, read N- to C-terminus: Variant surface antigen F (174 aa).

The N-terminal stretch at 1 to 29 (MKKSIFSKKLLFSFGSLVALAAIPLITIS) is a signal peptide. A lipid anchor (N-palmitoyl cysteine) is attached at C30. A lipid anchor (S-diacylglycerol cysteine) is attached at C30. The segment at 32–174 (QTNTDQSQQP…PEQGNSQVSK (143 aa)) is disordered. Residues 43 to 53 (SGSGSGSGTSN) are compositionally biased toward gly residues. Tandem repeats lie at residues 55 to 67 (SGST…GNNQ), 68 to 80 (GGST…GNNQ), 81 to 93 (GGST…GNNQ), 94 to 106 (GGST…GNNQ), 107 to 119 (GGST…GNNQ), 120 to 132 (GGST…GNNQ), 133 to 145 (GGST…GNNQ), 146 to 158 (GGST…GNNQ), and 159 to 171 (GGST…GNSQ). A 9 X 13 AA tandem repeats region spans residues 55–171 (SGSTPTPEQG…TPTPEQGNSQ (117 aa)). Residues 62–174 (EQGNNQGGST…PEQGNSQVSK (113 aa)) are compositionally biased toward polar residues.

The protein localises to the cell membrane. In terms of biological role, responsible for the antigenic diversity for host adaptation. Expression in E.coli of a construct containing vlpD, vlpE, and vlpF yields antigenically distinguishable products corresponding to each gene. This Mesomycoplasma hyorhinis (Mycoplasma hyorhinis) protein is Variant surface antigen F (vlpF).